The sequence spans 351 residues: Mannonate dehydratase (351 aa).

This sequence belongs to the mannonate dehydratase family. Requires Fe(2+) as cofactor. The cofactor is Mn(2+).

The enzyme catalyses D-mannonate = 2-dehydro-3-deoxy-D-gluconate + H2O. The protein operates within carbohydrate metabolism; pentose and glucuronate interconversion. Its function is as follows. Catalyzes the dehydration of D-mannonate. This Clostridium acetobutylicum (strain ATCC 824 / DSM 792 / JCM 1419 / IAM 19013 / LMG 5710 / NBRC 13948 / NRRL B-527 / VKM B-1787 / 2291 / W) protein is Mannonate dehydratase.